Reading from the N-terminus, the 6753-residue chain is Putative histone-lysine N-methyltransferase 1 (6753 aa).

Disordered regions lie at residues 1 to 28 (MSENSDEGKMQKGKGNEMNEDKIICKKE), 418 to 458 (FGNM…GKKN), 470 to 522 (DTTL…CNPS), 736 to 1024 (DDDE…KKDK), 1487 to 1545 (FNNN…NTAT), and 1557 to 1642 (YKKV…GKSK). The span at 435 to 449 (NNTSKNNISNNNNNM) shows a compositional bias: low complexity. Basic and acidic residues predominate over residues 475–502 (QAKKESIKTVSKNERKNNMNKHSHDNKV). The segment covering 504-516 (KLNKRMSNKRRNN) has biased composition (basic residues). A compositionally biased stretch (basic and acidic residues) spans 739-794 (ECKKENKDNISESSKRSNNIGEKKMLHVEKSEEHDDMTSDSNKEDTKIEEGRKKSN). Residues 798–808 (IDVDDGEEEEN) are compositionally biased toward acidic residues. The span at 809-833 (VNNNDNNNDNNNDNDNSSDNNNNDD) shows a compositional bias: low complexity. Basic and acidic residues-rich tracts occupy residues 853-866 (EKKDVKENTDDKNL) and 885-900 (IKKDNDKKKKYEKKNI). Residues 912 to 932 (RSNSSSTSTSNSSSKSKSSNC) show a composition bias toward low complexity. Composition is skewed to basic and acidic residues over residues 945-955 (KMDEKNSEQKK) and 964-975 (TCNEGKSKKDST). Basic residues-rich tracts occupy residues 1002 to 1019 (EKKKKINNSKINKGRKGI) and 1492 to 1506 (KNKRTKNGKKKKNTI). Residues 1522-1533 (SNSHSIEVSSSE) are compositionally biased toward low complexity. Residues 1566 to 1599 (KNGENKNGENKNGDIKNDDIKNDDIKNDDIRNDD) show a composition bias toward basic and acidic residues. Residues 1615–1632 (ESNNIDNNNSSNDSLSDV) are compositionally biased toward low complexity. 3 consecutive PHD-type zinc fingers follow at residues 1671–1728 (CYRC…CLKC), 1761–1819 (KNFC…CSIG), and 2510–2579 (KECC…CIKC). An RING-type; degenerate zinc finger spans residues 1764 to 1817 (CIMCNEKYDEDDSKKWVQCDVCKFWIHLSCDKNESRNIETLSNKNIDYKCPTCS). Residues 1816-1919 (CSIGTFHDKI…KKGRVIIKNM (104 aa)) enclose the Bromo domain. Basic and acidic residues predominate over residues 2694–2705 (ECNKNEKKKNDN). Disordered stretches follow at residues 2694-2768 (ECNK…KDTK), 3053-3072 (EMESNNNNNNNNNNSDCNNN), 4182-4254 (NEQN…LKTT), 4295-4349 (ENDE…ENEK), and 5331-5460 (NMNM…NNDK). Low complexity predominate over residues 2720 to 2735 (NNNNNNNGDDNNNIDN). Basic and acidic residues predominate over residues 2758–2768 (NEEKKNNKDTK). Low complexity predominate over residues 3057-3072 (NNNNNNNNNNSDCNNN). Basic and acidic residues-rich tracts occupy residues 4212-4223 (SKKDMLIKKEMN), 4239-4254 (SPKKDDELRENDLKTT), and 4297-4321 (DENKEKGIKKEKNDEEKKNDAEKKK). A compositionally biased stretch (basic residues) spans 4322–4338 (KENKKGREKSVKVRKTK). Low complexity-rich tracts occupy residues 5331–5340 (NMNMLDNNMN) and 5348–5400 (ENNN…NNNN). The span at 5401-5411 (KSKKNTQKKKD) shows a compositional bias: basic residues. Residues 5416–5426 (VKINQNNSNNK) show a composition bias toward low complexity. A compositionally biased stretch (basic and acidic residues) spans 5434 to 5460 (SKDNEELKSDNTKNNKTKDSDGNNNDK). The C2HC pre-PHD-type; degenerate zinc finger occupies 5496–5532 (YMKEKKCKNKEKNRGSKNNNIKNIKLIDMCEWKEDRN). A PHD-type 4; degenerate zinc finger spans residues 5558–5610 (STCFLCGYNNASVYCSNEDCNVKFHLNCAFYSTVIKDPSNNPFFRYLKCFNLV). A compositionally biased stretch (low complexity) spans 5905 to 5952 (NDNNNDINNNDNNNNENNNENINDNNNNNNNNNNNNNNNNSNNNNNNN). 3 disordered regions span residues 5905-5958 (NDNN…YYHN), 6103-6133 (DCSNEENNTSDDEENENRKNENDDDNIPEHI), and 6212-6235 (KFSDNKNYASDDEEKKKKKRKNQT). Over residues 6118–6133 (ENRKNENDDDNIPEHI) the composition is skewed to basic and acidic residues. One can recognise an SET domain in the interval 6612–6729 (LRLYVKKSSI…AHEEITYDYQ (118 aa)). Residues 6737 to 6753 (KKLICLCGSSTCLGRMN) form the Post-SET domain.

Belongs to the class V-like SAM-binding methyltransferase superfamily.

The enzyme catalyses L-lysyl-[histone] + S-adenosyl-L-methionine = N(6)-methyl-L-lysyl-[histone] + S-adenosyl-L-homocysteine + H(+). Its function is as follows. Probable histone methyltransferase. This chain is Putative histone-lysine N-methyltransferase 1 (SET1), found in Plasmodium falciparum (isolate 3D7).